Reading from the N-terminus, the 142-residue chain is Hemoglobin subunit alpha-1/2 (142 aa).

The 141-residue stretch at 2–142 folds into the Globin domain; sequence VLSPADKTNI…VSTVLTSKYR (141 aa). Residue Ser-4 is modified to Phosphoserine. Lys-8 bears the N6-succinyllysine mark. Thr-9 carries the post-translational modification Phosphothreonine. Lys-12 is modified (N6-succinyllysine). Lys-17 bears the N6-acetyllysine; alternate mark. Lys-17 is subject to N6-succinyllysine; alternate. Phosphotyrosine is present on Tyr-25. Lys-41 bears the N6-succinyllysine mark. Residue His-59 participates in O2 binding. His-88 is a heme b binding site. Ser-103 is modified (phosphoserine). Thr-109 carries the phosphothreonine modification. Ser-125 bears the Phosphoserine mark. 2 positions are modified to phosphothreonine: Thr-135 and Thr-138. Ser-139 is subject to Phosphoserine.

The protein belongs to the globin family. As to quaternary structure, heterotetramer of two alpha chains and two beta chains. Red blood cells.

In terms of biological role, involved in oxygen transport from the lung to the various peripheral tissues. This is Hemoglobin subunit alpha-1/2 from Oryctolagus cuniculus (Rabbit).